Reading from the N-terminus, the 817-residue chain is Coiled-coil domain-containing protein 175 (817 aa).

Coiled coils occupy residues 130 to 166 (ILEISQVKGKIEKTNDEIKFLNDKIIELKNMNEALGI) and 217 to 594 (LQDA…KQEE). A disordered region spans residues 761–817 (EEESPSSLSKEDLQKAGMKQKEEKTLRFSPSLHTRRDTLSRNCKMIKKRSRSPKNKP). Basic and acidic residues predominate over residues 769–786 (SKEDLQKAGMKQKEEKTL). The span at 804 to 817 (KMIKKRSRSPKNKP) shows a compositional bias: basic residues.

The sequence is that of Coiled-coil domain-containing protein 175 (Ccdc175) from Rattus norvegicus (Rat).